Consider the following 199-residue polypeptide: FMN-dependent NADH:quinone oxidoreductase (199 aa).

Residues Ser9 and 95-98 (MYNF) contribute to the FMN site.

The protein belongs to the azoreductase type 1 family. In terms of assembly, homodimer. The cofactor is FMN.

The catalysed reaction is 2 a quinone + NADH + H(+) = 2 a 1,4-benzosemiquinone + NAD(+). The enzyme catalyses N,N-dimethyl-1,4-phenylenediamine + anthranilate + 2 NAD(+) = 2-(4-dimethylaminophenyl)diazenylbenzoate + 2 NADH + 2 H(+). In terms of biological role, quinone reductase that provides resistance to thiol-specific stress caused by electrophilic quinones. Functionally, also exhibits azoreductase activity. Catalyzes the reductive cleavage of the azo bond in aromatic azo compounds to the corresponding amines. This chain is FMN-dependent NADH:quinone oxidoreductase, found in Dechloromonas aromatica (strain RCB).